The chain runs to 242 residues: MEPKYQRILIKLSGEALAGEKGVGIDIPTVQAIAKEIAEVHVSGVQIALVIGGGNLWRGEPAADAGMDRVQADYTGMLGTVMNALVMADSLQHYGVDTRVQTAIPMQNVAEPYIRGRALRHLEKNRIVVFGAGIGSPYFSTDTTAALRAAEIEADAILMAKNGVDGVYNADPKKDANAVKFDELTHGEVIKRGLKIMDATASTLSMDNDIDLVVFNMNEAGNIQRVVFGEHIGTTVSNKVCD.

Residue 11–14 (KLSG) coordinates ATP. The tract at residues 19–24 (GEKGVG) is involved in allosteric activation by GTP. A UMP-binding site is contributed by G53. Residues G54 and R58 each coordinate ATP. Residues D73 and 134 to 141 (IGSPYFST) contribute to the UMP site. Residues N162, Y168, and D171 each contribute to the ATP site.

This sequence belongs to the UMP kinase family. In terms of assembly, homohexamer.

It localises to the cytoplasm. It catalyses the reaction UMP + ATP = UDP + ADP. Its pathway is pyrimidine metabolism; CTP biosynthesis via de novo pathway; UDP from UMP (UMPK route): step 1/1. Allosterically activated by GTP. Inhibited by UTP. Its function is as follows. Catalyzes the reversible phosphorylation of UMP to UDP. In Streptococcus pyogenes serotype M1, this protein is Uridylate kinase.